The chain runs to 249 residues: 5-amino-6-(5-phospho-D-ribitylamino)uracil phosphatase YcsE (249 aa).

Asp-16 acts as the Nucleophile in catalysis. Asp-16 is a Mg(2+) binding site. Position 17 (Met-17) interacts with phosphate. Asp-18 lines the Mg(2+) pocket. Phosphate-binding positions include 50–51 (TG) and Lys-177. Residues Asp-200 and Ser-201 each coordinate Mg(2+). Asn-203 contributes to the phosphate binding site.

This sequence belongs to the HAD-like hydrolase superfamily. Cof family. Requires Mg(2+) as cofactor.

The enzyme catalyses 5-amino-6-(5-phospho-D-ribitylamino)uracil + H2O = 5-amino-6-(D-ribitylamino)uracil + phosphate. Its pathway is cofactor biosynthesis; riboflavin biosynthesis; 5-amino-6-(D-ribitylamino)uracil from GTP: step 4/4. Its function is as follows. Catalyzes the dephosphorylation of the riboflavin precursor 5-amino-6-(5-phospho-D-ribitylamino)uracil and of flavin mononucleotide (FMN) in vitro. To a lesser extent, may also catalyze the dephosphorylation of a broad range of substrates such as phosphorylated sugars and triphosphate nucleotides in vitro. In Bacillus subtilis (strain 168), this protein is 5-amino-6-(5-phospho-D-ribitylamino)uracil phosphatase YcsE (ycsE).